A 714-amino-acid chain; its full sequence is Fatty acid oxidation complex subunit alpha (714 aa).

Positions 1-190 are enoyl-CoA hydratase; it reads MEMASAFTLN…KLGLVDDVVP (190 aa). A 3-hydroxyacyl-CoA dehydrogenase region spans residues 306-714; sequence APLNSVGILG…FWKTTATDLQ (409 aa).

In the N-terminal section; belongs to the enoyl-CoA hydratase/isomerase family. This sequence in the central section; belongs to the 3-hydroxyacyl-CoA dehydrogenase family. In terms of assembly, heterotetramer of two alpha chains (FadJ) and two beta chains (FadI).

The protein resides in the cytoplasm. The enzyme catalyses a (3S)-3-hydroxyacyl-CoA = a (2E)-enoyl-CoA + H2O. It catalyses the reaction a 4-saturated-(3S)-3-hydroxyacyl-CoA = a (3E)-enoyl-CoA + H2O. The catalysed reaction is a (3S)-3-hydroxyacyl-CoA + NAD(+) = a 3-oxoacyl-CoA + NADH + H(+). It carries out the reaction (3S)-3-hydroxybutanoyl-CoA = (3R)-3-hydroxybutanoyl-CoA. The protein operates within lipid metabolism; fatty acid beta-oxidation. Its function is as follows. Catalyzes the formation of a hydroxyacyl-CoA by addition of water on enoyl-CoA. Also exhibits 3-hydroxyacyl-CoA epimerase and 3-hydroxyacyl-CoA dehydrogenase activities. This chain is Fatty acid oxidation complex subunit alpha, found in Escherichia coli O127:H6 (strain E2348/69 / EPEC).